The primary structure comprises 1499 residues: Ubiquitinating/deubiquitinating enzyme SdeA (1499 aa).

The tract at residues 1 to 193 (MPKYVEGVEL…GKALRENTEK (193 aa)) is deubiquitinase. Active-site for deubiquitinase activity residues include histidine 64 and aspartate 80. Cysteine 118 functions as the Nucleophile; for deubiquitinase activity in the catalytic mechanism. The segment at 760-1000 (PPTRLFRGLN…KALAAFPSDT (241 aa)) is mono-ADP-ribosyltransferase. NAD(+) is bound at residue 766–772 (RGLNLSE). 5-glutamyl glutamate is present on glutamate 860. Glutamate 862 contacts NAD(+). A coiled-coil region spans residues 1059–1181 (KEMGTIRREL…IDTKLADAYL (123 aa)).

The protein belongs to the SidE family. Interacts with IcmS. Is able to ubiquitinate itself, but this modification is not required to ubiquitinate Rab33b. In terms of processing, glutamylated at Glu-860 by SidJ; glutamylation inhibits SdeA activity to catalyze the production of ADP-ribosylated ubiquitin.

The protein resides in the secreted. The protein localises to the host cell. It catalyses the reaction L-arginyl-[protein] + NAD(+) = N(omega)-(ADP-D-ribosyl)-L-arginyl-[protein] + nicotinamide + H(+). Its activity is regulated as follows. Ubiquitination catalyzed by SdeA is insensitive to the cysteine alkylation agent maleimide, suggesting that a cysteine conjugation of ubiquitin does not form during the reaction. Secreted effector that interferes with the host cell ubiquitin pathway and is required for intracellular bacterial replication. Catalyzes the ubiquitination of several mammalian Rab proteins (Rab33b, Rab1, Rab6a and Rab30) during L.pneumophila infection, without engaging the standard cellular enzyme cascade (E1 and E2). Transfers an ADP-ribose moiety from NAD to the 'Arg-42' residue of ubiquitin in a reaction that releases nicotinamide. The modified ubiquitin is subsequently transferred to serine residues of the substrate protein via a phosphoribose linker that results in the release of AMP. Cannot ubiquitinate the endosomal Rab5 or the cytoskeletal small GTPase Rac1. Also acts as a deubiquitinase (DUB), catalyzing the cleavage of three of the most abundant polyubiquitin chains ('Lys-11', 'Lys-48' and 'Lys-63') with a distinct preference for 'Lys-63' linkages; is thus able to efficiently remove 'Lys-63'-linked polyubiquitin chains from the phagosomal surface. Is also able to remove NEDD8 from neddylated proteins, but is unable to recognize SUMO. The DUB activity of SdeA is important for regulating the dynamics of ubiquitin association with the bacterial phagosome, but is dispensable for its role in intracellular bacterial replication. The protein is Ubiquitinating/deubiquitinating enzyme SdeA of Legionella pneumophila subsp. pneumophila (strain Philadelphia 1 / ATCC 33152 / DSM 7513).